The primary structure comprises 476 residues: MNFETVIGLEVHVELKTKSKIFSSSPNAFGAPPNTQTNVIDLGYPGVLPVLNRQAVEFAMKAAMALNCEIATETKFDRKNYFYPDNPKAYQISQYDQPLGRNGWIEIEVNGKKKKIGITRIHLEEDAGKLTHTGDGYSLVDFNRQGTPLIEIVSEPDIRSPEEAYAYLEKLKAIIQYTGVSDCKMEEGSLRCDANISLRPLGSDKFGTKTELKNLNSFNFVRMGLEYEAKRQEKILLSGGVIRQETRRFDEATKTTVLMRVKEGSEDYRYFPEPDLVMLYIDDEWKERVRASIPELPDARRKRYIEEWGLPEYDAKVLTLTKEMADFFEATVANGADPKLASNWLMVEVSGYLNAEQKELHDIALTPESLAGMIKLIQNGTISSKIAKKVFKELVEHGGDPEKIVKEKGLVQISDEGALRKIVLEVLDANPQSVEDYKNGKDRALGFLVGQVMKATKGQANPPLVNKLLVEEIGKR.

This sequence belongs to the GatB/GatE family. GatB subfamily. As to quaternary structure, heterotrimer of A, B and C subunits.

It catalyses the reaction L-glutamyl-tRNA(Gln) + L-glutamine + ATP + H2O = L-glutaminyl-tRNA(Gln) + L-glutamate + ADP + phosphate + H(+). The enzyme catalyses L-aspartyl-tRNA(Asn) + L-glutamine + ATP + H2O = L-asparaginyl-tRNA(Asn) + L-glutamate + ADP + phosphate + 2 H(+). In terms of biological role, allows the formation of correctly charged Asn-tRNA(Asn) or Gln-tRNA(Gln) through the transamidation of misacylated Asp-tRNA(Asn) or Glu-tRNA(Gln) in organisms which lack either or both of asparaginyl-tRNA or glutaminyl-tRNA synthetases. The reaction takes place in the presence of glutamine and ATP through an activated phospho-Asp-tRNA(Asn) or phospho-Glu-tRNA(Gln). The polypeptide is Aspartyl/glutamyl-tRNA(Asn/Gln) amidotransferase subunit B (Geobacillus kaustophilus (strain HTA426)).